Consider the following 734-residue polypeptide: Photosystem I P700 chlorophyll a apoprotein A2 (734 aa).

The next 8 helical transmembrane spans lie at 46–69 (IFAS…FHVA), 135–158 (LYTG…LHLQ), 175–199 (LNHH…HVAI), 273–291 (MAHH…GHMY), 330–353 (IHFQ…QHMY), 369–395 (AALY…IFFI), 417–439 (AIIS…LYVH), and 517–535 (FLVH…LILV). The [4Fe-4S] cluster site is built by Cys-559 and Cys-568. Helical transmembrane passes span 575–596 (AFYL…YWHW) and 643–665 (LSVW…MFLI). 3 residues coordinate chlorophyll a: His-654, Met-662, and Tyr-670. Trp-671 lines the phylloquinone pocket. A helical membrane pass occupies residues 707–727 (LVGLAHFSVGYIFTYAAFLIA).

The protein belongs to the PsaA/PsaB family. The PsaA/B heterodimer binds the P700 chlorophyll special pair and subsequent electron acceptors. PSI consists of a core antenna complex that captures photons, and an electron transfer chain that converts photonic excitation into a charge separation. The eukaryotic PSI reaction center is composed of at least 11 subunits. It depends on P700 is a chlorophyll a/chlorophyll a' dimer, A0 is one or more chlorophyll a, A1 is one or both phylloquinones and FX is a shared 4Fe-4S iron-sulfur center. as a cofactor.

Its subcellular location is the plastid. The protein resides in the chloroplast thylakoid membrane. The enzyme catalyses reduced [plastocyanin] + hnu + oxidized [2Fe-2S]-[ferredoxin] = oxidized [plastocyanin] + reduced [2Fe-2S]-[ferredoxin]. Its function is as follows. PsaA and PsaB bind P700, the primary electron donor of photosystem I (PSI), as well as the electron acceptors A0, A1 and FX. PSI is a plastocyanin-ferredoxin oxidoreductase, converting photonic excitation into a charge separation, which transfers an electron from the donor P700 chlorophyll pair to the spectroscopically characterized acceptors A0, A1, FX, FA and FB in turn. Oxidized P700 is reduced on the lumenal side of the thylakoid membrane by plastocyanin. The sequence is that of Photosystem I P700 chlorophyll a apoprotein A2 from Nandina domestica (Heavenly bamboo).